The chain runs to 139 residues: Small ribosomal subunit protein uS12 (139 aa).

It belongs to the universal ribosomal protein uS12 family. As to quaternary structure, part of the 30S ribosomal subunit. Contacts proteins S8 and S17. May interact with IF1 in the 30S initiation complex.

In terms of biological role, with S4 and S5 plays an important role in translational accuracy. Functionally, interacts with and stabilizes bases of the 16S rRNA that are involved in tRNA selection in the A site and with the mRNA backbone. Located at the interface of the 30S and 50S subunits, it traverses the body of the 30S subunit contacting proteins on the other side and probably holding the rRNA structure together. The combined cluster of proteins S8, S12 and S17 appears to hold together the shoulder and platform of the 30S subunit. The protein is Small ribosomal subunit protein uS12 of Mycoplasma pneumoniae (strain ATCC 29342 / M129 / Subtype 1) (Mycoplasmoides pneumoniae).